The primary structure comprises 173 residues: MRNPFSLFNLPVQFQIDNAQLSERYLALQKQFHPDNFANESADKQLAALQQSADVNEALQILKDPIARATAIIEINTGIVKNLEENSRQDLDFLMQHMEWHEKLDSIENSRSEQQLAGFLKQIKTEQRNVEQQLATLLNQQQWQKADLLTERLRYFKKLIIQIEKVEEKLLEY.

The region spanning 3–75 is the J domain; it reads NPFSLFNLPV…IARATAIIEI (73 aa).

The protein belongs to the HscB family. In terms of assembly, interacts with HscA and stimulates its ATPase activity.

In terms of biological role, co-chaperone involved in the maturation of iron-sulfur cluster-containing proteins. Seems to help targeting proteins to be folded toward HscA. This Haemophilus ducreyi (strain 35000HP / ATCC 700724) protein is Co-chaperone protein HscB homolog.